The primary structure comprises 59 residues: MADLKVTQIKSIIGTKQNQKDSLRTLGLKGIRQTVVREDNAQNRGLINVVRHLVTVEEV.

It belongs to the universal ribosomal protein uL30 family. As to quaternary structure, part of the 50S ribosomal subunit.

The polypeptide is Large ribosomal subunit protein uL30 (Rhodococcus erythropolis (strain PR4 / NBRC 100887)).